Consider the following 1919-residue polypeptide: Disks large homolog 5 (1919 aa).

Residues 98–142 form a disordered region; it reads AEGAGSTYSVLSTMPSDSESSSSLSSVGTTGKAPSPPPLLTDQQV. The segment covering 109–123 has biased composition (low complexity); that stretch reads STMPSDSESSSSLSS. Phosphoserine is present on residues serine 264 and serine 295. Residues 383 to 599 are a coiled coil; that stretch reads LNKATAQNKD…LEKEARFRQL (217 aa). 2 consecutive PDZ domains span residues 620–710 and 705–796; these read VVEF…RRRK and VVRR…LKVF. A Phosphoserine modification is found at serine 900. Disordered regions lie at residues 927-1122, 1150-1187, 1201-1230, 1245-1264, and 1271-1306; these read GVGE…FRPK, QEWA…PSTT, SHRV…HQGR, EMRA…LGSS, and AERI…PQSP. Threonine 984 is modified (phosphothreonine). Position 1000 is a phosphoserine (serine 1000). At threonine 1011 the chain carries Phosphothreonine. Over residues 1017–1030 the composition is skewed to basic and acidic residues; the sequence is RRSDSIKFQHRLET. At serine 1021 the chain carries Phosphoserine. The span at 1045–1055 shows a compositional bias: pro residues; it reads TSPPSALPPDV. Position 1183 is a phosphothreonine (threonine 1183). Residues serine 1209 and serine 1263 each carry the phosphoserine modification. Low complexity-rich tracts occupy residues 1252 to 1264 and 1284 to 1298; these read SNSL…LGSS and RSVV…SHSE. Position 1334 is a phosphoserine (serine 1334). The 80-residue stretch at 1350–1429 folds into the PDZ 3 domain; it reads HVKVQKGSEP…TITILAQYNP (80 aa). The disordered stretch occupies residues 1434-1493; it reads LSSHSRSSSHLDPAGTHSTLQGSGTTTPEHPSVIDPLMEQDEGPSTPPAKQSSSRIAGDA. Residues 1449-1462 show a composition bias toward polar residues; sequence THSTLQGSGTTTPE. A PDZ 4 domain is found at 1501 to 1582; sequence RVVFIKKSQL…GVRLKVQYRP (82 aa). Residues 1593–1661 enclose the SH3 domain; that stretch reads GDSFYIRALY…PSKYVMDQEF (69 aa). Phosphoserine is present on serine 1666. Positions 1722 to 1905 constitute a Guanylate kinase-like domain; it reads DSVSLAYQRV…ICTQILAMVN (184 aa).

This sequence belongs to the MAGUK family. As to quaternary structure, interacts with MPP1. Interacts with CTNNB1 and with the third SH3 domain of SORBS3 to form a ternary complex. Interacts (via coiled-coil domain) with MARK3. Interacts (via PDZ domain 3) with STK3/MST2 and STK4/MST1. Interacts with SCRIB. Interacts with CTNB1, SMO and (via PDZ4 or guanylate kinase-like domain) with KIF7. As to expression, highly expressed in normal breast tissues and low-grade breast cancer tissues (at protein level). Highly expressed in the placenta and prostate. Expressed at a lower level in the thyroid, spinal cord, trachea, adrenal gland, skeletal muscle, pancreas, heart, brain, liver and kidney. A short splice product shows more limited expression, being absent from at least the brain.

Its subcellular location is the cell junction. It is found in the cell membrane. It localises to the postsynaptic density. The protein resides in the cytoplasm. The protein localises to the cytoskeleton. Its subcellular location is the cilium basal body. Acts as a regulator of the Hippo signaling pathway. Negatively regulates the Hippo signaling pathway by mediating the interaction of MARK3 with STK3/4, bringing them together to promote MARK3-dependent hyperphosphorylation and inactivation of STK3 kinase activity toward LATS1. Positively regulates the Hippo signaling pathway by mediating the interaction of SCRIB with STK4/MST1 and LATS1 which is important for the activation of the Hippo signaling pathway. Involved in regulating cell proliferation, maintenance of epithelial polarity, epithelial-mesenchymal transition (EMT), cell migration and invasion. Plays an important role in dendritic spine formation and synaptogenesis in cortical neurons; regulates synaptogenesis by enhancing the cell surface localization of N-cadherin. Acts as a positive regulator of hedgehog (Hh) signaling pathway. Plays a critical role in the early point of the SMO activity cycle by interacting with SMO at the ciliary base to induce the accumulation of KIF7 and GLI2 at the ciliary tip for GLI2 activation. The sequence is that of Disks large homolog 5 (DLG5) from Homo sapiens (Human).